A 377-amino-acid chain; its full sequence is tRNA-specific 2-thiouridylase MnmA (377 aa).

ATP contacts are provided by residues 22 to 29 (GMSGGVDS) and M48. The tract at residues 108 to 110 (NPD) is interaction with target base in tRNA. The active-site Nucleophile is the C113. Cysteines 113 and 210 form a disulfide. G138 serves as a coordination point for ATP. An interaction with tRNA region spans residues 160-162 (KDQ). The active-site Cysteine persulfide intermediate is C210. The interaction with tRNA stretch occupies residues 322–323 (RY).

The protein belongs to the MnmA/TRMU family.

The protein resides in the cytoplasm. It carries out the reaction S-sulfanyl-L-cysteinyl-[protein] + uridine(34) in tRNA + AH2 + ATP = 2-thiouridine(34) in tRNA + L-cysteinyl-[protein] + A + AMP + diphosphate + H(+). Functionally, catalyzes the 2-thiolation of uridine at the wobble position (U34) of tRNA, leading to the formation of s(2)U34. The protein is tRNA-specific 2-thiouridylase MnmA of Shewanella amazonensis (strain ATCC BAA-1098 / SB2B).